The following is a 164-amino-acid chain: Protein-export protein SecB (164 aa).

Belongs to the SecB family. Homotetramer, a dimer of dimers. One homotetramer interacts with 1 SecA dimer.

It localises to the cytoplasm. Functionally, one of the proteins required for the normal export of preproteins out of the cell cytoplasm. It is a molecular chaperone that binds to a subset of precursor proteins, maintaining them in a translocation-competent state. It also specifically binds to its receptor SecA. The polypeptide is Protein-export protein SecB (Stutzerimonas stutzeri (strain A1501) (Pseudomonas stutzeri)).